A 341-amino-acid polypeptide reads, in one-letter code: Basic membrane protein B (341 aa).

A signal peptide spans 1–14 (MRIVIFIFGILLTS). C15 carries the N-palmitoyl cysteine lipid modification. A lipid anchor (S-diacylglycerol cysteine) is attached at C15.

The protein belongs to the BMP lipoprotein family. As to quaternary structure, monomer.

Its subcellular location is the cell inner membrane. In terms of biological role, may be part of an ABC-type nucleoside uptake system involved in the purine salvage pathway. In Borreliella burgdorferi (strain ATCC 35210 / DSM 4680 / CIP 102532 / B31) (Borrelia burgdorferi), this protein is Basic membrane protein B (bmpB).